The following is a 279-amino-acid chain: Phosphonoacetaldehyde hydrolase (279 aa).

Asp-20 serves as the catalytic Nucleophile. Mg(2+)-binding residues include Asp-20 and Ala-22. The Schiff-base intermediate with substrate role is filled by Lys-62. Residue Asp-196 coordinates Mg(2+).

It belongs to the HAD-like hydrolase superfamily. PhnX family. Homodimer. Mg(2+) is required as a cofactor.

The enzyme catalyses phosphonoacetaldehyde + H2O = acetaldehyde + phosphate + H(+). Functionally, involved in phosphonate degradation. The sequence is that of Phosphonoacetaldehyde hydrolase from Aeromonas hydrophila subsp. hydrophila (strain ATCC 7966 / DSM 30187 / BCRC 13018 / CCUG 14551 / JCM 1027 / KCTC 2358 / NCIMB 9240 / NCTC 8049).